The following is a 302-amino-acid chain: Glycine--tRNA ligase alpha subunit (302 aa).

Belongs to the class-II aminoacyl-tRNA synthetase family. In terms of assembly, tetramer of two alpha and two beta subunits.

The protein resides in the cytoplasm. The enzyme catalyses tRNA(Gly) + glycine + ATP = glycyl-tRNA(Gly) + AMP + diphosphate. The sequence is that of Glycine--tRNA ligase alpha subunit from Edwardsiella ictaluri (strain 93-146).